Consider the following 209-residue polypeptide: 8-oxoguanine DNA glycosylase/AP lyase (209 aa).

Residues Lys132 and Asp150 contribute to the active site.

This sequence belongs to the type-2 OGG1 family.

The enzyme catalyses 2'-deoxyribonucleotide-(2'-deoxyribose 5'-phosphate)-2'-deoxyribonucleotide-DNA = a 3'-end 2'-deoxyribonucleotide-(2,3-dehydro-2,3-deoxyribose 5'-phosphate)-DNA + a 5'-end 5'-phospho-2'-deoxyribonucleoside-DNA + H(+). In terms of biological role, catalyzes the excision of an oxidatively damaged form of guanine (7,8-dihydro-8-oxoguanine = 8-oxoG) from DNA. Also cleaves the DNA backbone at apurinic/apyrimidinic sites (AP sites). The chain is 8-oxoguanine DNA glycosylase/AP lyase from Picrophilus torridus (strain ATCC 700027 / DSM 9790 / JCM 10055 / NBRC 100828 / KAW 2/3).